Consider the following 106-residue polypeptide: Large ribosomal subunit protein bL21 (106 aa).

Belongs to the bacterial ribosomal protein bL21 family. Part of the 50S ribosomal subunit. Contacts protein L20.

Functionally, this protein binds to 23S rRNA in the presence of protein L20. In Streptomyces griseus subsp. griseus (strain JCM 4626 / CBS 651.72 / NBRC 13350 / KCC S-0626 / ISP 5235), this protein is Large ribosomal subunit protein bL21.